We begin with the raw amino-acid sequence, 946 residues long: Translation initiation factor IF-2 (946 aa).

Disordered stretches follow at residues 58–250 (AERK…AVVI) and 301–324 (VSRDKRRGRQPGRPISEEQAKSLS). 2 stretches are compositionally biased toward low complexity: residues 102-165 (EPPQ…QPAA) and 174-185 (AQPSAPQPAAAQ). Pro residues predominate over residues 186-211 (PRPPQPPMPSRPPPAGYRPAPPPGAR). Residues 212 to 229 (PPMSAAPGAPAQPGAAAQ) show a composition bias toward low complexity. Residues 445–614 (IRPPVVTVMG…ALQSEVLELK (170 aa)) enclose the tr-type G domain. Residues 454–461 (GHVDHGKT) are G1. 454 to 461 (GHVDHGKT) contacts GTP. The segment at 479 to 483 (GITQH) is G2. Positions 500–503 (DTPG) are G3. Residues 500–504 (DTPGH) and 554–557 (NKVD) contribute to the GTP site. The segment at 554 to 557 (NKVD) is G4. The tract at residues 590–592 (SAR) is G5.

The protein belongs to the TRAFAC class translation factor GTPase superfamily. Classic translation factor GTPase family. IF-2 subfamily.

It is found in the cytoplasm. Its function is as follows. One of the essential components for the initiation of protein synthesis. Protects formylmethionyl-tRNA from spontaneous hydrolysis and promotes its binding to the 30S ribosomal subunits. Also involved in the hydrolysis of GTP during the formation of the 70S ribosomal complex. The polypeptide is Translation initiation factor IF-2 (Anaeromyxobacter sp. (strain K)).